Reading from the N-terminus, the 320-residue chain is o-succinylbenzoate synthase (320 aa).

The Proton donor role is filled by Lys-133. Residues Asp-161, Glu-190, and Asp-213 each contribute to the Mg(2+) site. Lys-235 acts as the Proton acceptor in catalysis.

It belongs to the mandelate racemase/muconate lactonizing enzyme family. MenC type 1 subfamily. A divalent metal cation serves as cofactor.

It catalyses the reaction (1R,6R)-6-hydroxy-2-succinyl-cyclohexa-2,4-diene-1-carboxylate = 2-succinylbenzoate + H2O. It participates in quinol/quinone metabolism; 1,4-dihydroxy-2-naphthoate biosynthesis; 1,4-dihydroxy-2-naphthoate from chorismate: step 4/7. Its pathway is quinol/quinone metabolism; menaquinone biosynthesis. In terms of biological role, converts 2-succinyl-6-hydroxy-2,4-cyclohexadiene-1-carboxylate (SHCHC) to 2-succinylbenzoate (OSB). This chain is o-succinylbenzoate synthase, found in Escherichia coli (strain SMS-3-5 / SECEC).